The sequence spans 647 residues: Threonine--tRNA ligase (647 aa).

Residues 1–61 (MINITFPDGA…TEDGSIEIVT (61 aa)) form the TGS domain. The interval 242–540 (DHRKLGKELD…LIENYKGAFP (299 aa)) is catalytic. Zn(2+) is bound by residues C336, H387, and H517.

Belongs to the class-II aminoacyl-tRNA synthetase family. As to quaternary structure, homodimer. Zn(2+) is required as a cofactor.

The protein localises to the cytoplasm. It catalyses the reaction tRNA(Thr) + L-threonine + ATP = L-threonyl-tRNA(Thr) + AMP + diphosphate + H(+). In terms of biological role, catalyzes the attachment of threonine to tRNA(Thr) in a two-step reaction: L-threonine is first activated by ATP to form Thr-AMP and then transferred to the acceptor end of tRNA(Thr). Also edits incorrectly charged L-seryl-tRNA(Thr). This Streptococcus pneumoniae (strain ATCC 700669 / Spain 23F-1) protein is Threonine--tRNA ligase.